The following is a 188-amino-acid chain: Photosystem I assembly protein Ycf4 (188 aa).

The next 2 helical transmembrane spans lie at tyrosine 26–serine 46 and leucine 68–isoleucine 88.

It belongs to the Ycf4 family.

It is found in the cellular thylakoid membrane. In terms of biological role, seems to be required for the assembly of the photosystem I complex. In Synechococcus elongatus (strain ATCC 33912 / PCC 7942 / FACHB-805) (Anacystis nidulans R2), this protein is Photosystem I assembly protein Ycf4.